The sequence spans 67 residues: Large ribosomal subunit protein bL35 (67 aa).

The protein belongs to the bacterial ribosomal protein bL35 family.

This chain is Large ribosomal subunit protein bL35, found in Allorhizobium ampelinum (strain ATCC BAA-846 / DSM 112012 / S4) (Agrobacterium vitis (strain S4)).